We begin with the raw amino-acid sequence, 120 residues long: NAD(P)H-quinone oxidoreductase subunit 3 (120 aa).

The next 3 helical transmembrane spans lie at 10–30, 64–84, and 89–109; these read FLGF…TNLI, MFAL…PWAV, and LGLL…IALA.

This sequence belongs to the complex I subunit 3 family. NDH-1 can be composed of about 15 different subunits; different subcomplexes with different compositions have been identified which probably have different functions.

It localises to the cellular thylakoid membrane. It catalyses the reaction a plastoquinone + NADH + (n+1) H(+)(in) = a plastoquinol + NAD(+) + n H(+)(out). It carries out the reaction a plastoquinone + NADPH + (n+1) H(+)(in) = a plastoquinol + NADP(+) + n H(+)(out). Its function is as follows. NDH-1 shuttles electrons from an unknown electron donor, via FMN and iron-sulfur (Fe-S) centers, to quinones in the respiratory and/or the photosynthetic chain. The immediate electron acceptor for the enzyme in this species is believed to be plastoquinone. Couples the redox reaction to proton translocation, and thus conserves the redox energy in a proton gradient. Cyanobacterial NDH-1 also plays a role in inorganic carbon-concentration. In Prochlorococcus marinus (strain MIT 9301), this protein is NAD(P)H-quinone oxidoreductase subunit 3.